The chain runs to 621 residues: UvrABC system protein C (621 aa).

In terms of domain architecture, GIY-YIG spans glutamate 13–valine 92. Residues aspartate 205–isoleucine 240 form the UVR domain.

Belongs to the UvrC family. As to quaternary structure, interacts with UvrB in an incision complex.

The protein localises to the cytoplasm. Its function is as follows. The UvrABC repair system catalyzes the recognition and processing of DNA lesions. UvrC both incises the 5' and 3' sides of the lesion. The N-terminal half is responsible for the 3' incision and the C-terminal half is responsible for the 5' incision. This is UvrABC system protein C from Alkaliphilus oremlandii (strain OhILAs) (Clostridium oremlandii (strain OhILAs)).